The sequence spans 427 residues: 3-phosphoshikimate 1-carboxyvinyltransferase (427 aa).

The 3-phosphoshikimate site is built by K23, S24, and R28. Residue K23 participates in phosphoenolpyruvate binding. Residues G97 and R125 each coordinate phosphoenolpyruvate. Residues S170, S171, Q172, S198, D314, N337, and K341 each contribute to the 3-phosphoshikimate site. Residue Q172 coordinates phosphoenolpyruvate. D314 functions as the Proton acceptor in the catalytic mechanism. Phosphoenolpyruvate contacts are provided by R345, R387, and K412.

Belongs to the EPSP synthase family. In terms of assembly, monomer.

It localises to the cytoplasm. The catalysed reaction is 3-phosphoshikimate + phosphoenolpyruvate = 5-O-(1-carboxyvinyl)-3-phosphoshikimate + phosphate. It participates in metabolic intermediate biosynthesis; chorismate biosynthesis; chorismate from D-erythrose 4-phosphate and phosphoenolpyruvate: step 6/7. Catalyzes the transfer of the enolpyruvyl moiety of phosphoenolpyruvate (PEP) to the 5-hydroxyl of shikimate-3-phosphate (S3P) to produce enolpyruvyl shikimate-3-phosphate and inorganic phosphate. The sequence is that of 3-phosphoshikimate 1-carboxyvinyltransferase from Buchnera aphidicola subsp. Acyrthosiphon pisum (strain 5A).